The primary structure comprises 53 residues: Tryptophan RNA-binding attenuator protein inhibitory protein (53 aa).

CXXCXGXG motif repeat units lie at residues 12-19 (CPKCERAG) and 26-33 (CPACSGKG).

Homopentamer or homohexamer.

It localises to the cytoplasm. By forming a complex with tryptophan-activated TRAP, and masking its RNA binding site, it inhibits TRAP's RNA binding ability, thereby abolishing TRAP regulation of gene expression, leading to antitermination and increased trp operon expression. AT acts by competing with messenger RNA for the RNA binding domain of TRAP. In Bacillus subtilis (strain 168), this protein is Tryptophan RNA-binding attenuator protein inhibitory protein (rtpA).